The chain runs to 406 residues: Phloroisovalerophenone synthase (406 aa).

The active site involves cysteine 171.

It belongs to the thiolase-like superfamily. Chalcone/stilbene synthases family.

It catalyses the reaction 3-methylbutanoyl-CoA + 3 malonyl-CoA + 3 H(+) = phlorisovalerophenone + 3 CO2 + 4 CoA. In terms of biological role, produces 3-methyl-1-(2,4,6-trihydroxyphenyl)butan-1-one (phloroisovalerophenone). This Psilotum nudum (Whisk fern) protein is Phloroisovalerophenone synthase (VPS).